The chain runs to 397 residues: Cathepsin E-B (397 aa).

A signal peptide spans 1–16; that stretch reads MRQILVLLLFVTLVYG. A propeptide spans 17–49 (activation peptide); sequence LIRVPLKRQKSIRKTPKEKGKLSHVWTQQGIDM. The Peptidase A1 domain occupies 74-385; the sequence is YFGEISIGTP…DRGNNRVGLA (312 aa). Residue N86 is glycosylated (N-linked (GlcNAc...) asparagine). D92 is a catalytic residue. C105 and C110 are joined by a disulfide. N130 carries an N-linked (GlcNAc...) asparagine glycan. A disulfide bond links C268 and C272. Residue D277 is part of the active site. Residues C310 and C344 are joined by a disulfide bond.

The protein belongs to the peptidase A1 family. In terms of assembly, homodimer; disulfide-linked. Glycosylated. Contains high mannose-type oligosaccharide. As to expression, expressed predominantly in the anterior and posterior adult stomach and at much lower levels in the larval foregut.

It is found in the endosome. It catalyses the reaction Similar to cathepsin D, but slightly broader specificity.. In terms of biological role, may have a role in immune function. Probably involved in the processing of antigenic peptides during MHC class II-mediated antigen presentation. The protein is Cathepsin E-B (ctse-b) of Xenopus laevis (African clawed frog).